Reading from the N-terminus, the 71-residue chain is DNA gyrase inhibitor YacG (71 aa).

Zn(2+) contacts are provided by cysteine 8, cysteine 11, cysteine 27, and cysteine 31. Residues 48 to 71 (VVEDDDLPPDAPGGESGGASGRLN) are disordered. Residues 61–71 (GESGGASGRLN) show a composition bias toward gly residues.

The protein belongs to the DNA gyrase inhibitor YacG family. As to quaternary structure, interacts with GyrB. Zn(2+) serves as cofactor.

Functionally, inhibits all the catalytic activities of DNA gyrase by preventing its interaction with DNA. Acts by binding directly to the C-terminal domain of GyrB, which probably disrupts DNA binding by the gyrase. In Ralstonia nicotianae (strain ATCC BAA-1114 / GMI1000) (Ralstonia solanacearum), this protein is DNA gyrase inhibitor YacG.